Reading from the N-terminus, the 311-residue chain is Large ribosomal subunit protein uL22 (311 aa).

Belongs to the universal ribosomal protein uL22 family. As to quaternary structure, part of the 50S ribosomal subunit.

Its function is as follows. This protein binds specifically to 23S rRNA; its binding is stimulated by other ribosomal proteins, e.g. L4, L17, and L20. It is important during the early stages of 50S assembly. It makes multiple contacts with different domains of the 23S rRNA in the assembled 50S subunit and ribosome. The globular domain of the protein is located near the polypeptide exit tunnel on the outside of the subunit, while an extended beta-hairpin is found that lines the wall of the exit tunnel in the center of the 70S ribosome. In Ureaplasma parvum serovar 3 (strain ATCC 27815 / 27 / NCTC 11736), this protein is Large ribosomal subunit protein uL22 (rplV).